The sequence spans 718 residues: Probable trehalose-phosphatase (718 aa).

Positions 449 to 470 (LSMDQTGHKKVDAKKKPGIRKK) are disordered. The segment covering 459–470 (VDAKKKPGIRKK) has biased composition (basic residues).

This sequence in the N-terminal section; belongs to the glycosyltransferase 20 family. It in the C-terminal section; belongs to the trehalose phosphatase family.

The catalysed reaction is alpha,alpha-trehalose 6-phosphate + H2O = alpha,alpha-trehalose + phosphate. This chain is Probable trehalose-phosphatase, found in Encephalitozoon cuniculi (strain GB-M1) (Microsporidian parasite).